A 792-amino-acid chain; its full sequence is Phenylalanine--tRNA ligase beta subunit (792 aa).

Positions 39-147 (GESLGQVVVA…DDAPVGQALA (109 aa)) constitute a tRNA-binding domain. One can recognise a B5 domain in the interval 400–475 (PQPARILLRR…RIHGYDRVPT (76 aa)). 4 residues coordinate Mg(2+): Asp453, Asp459, Glu462, and Asp463. Residues 698 to 791 (SRFPSVRRDL…IEREHRARIR (94 aa)) enclose the FDX-ACB domain.

It belongs to the phenylalanyl-tRNA synthetase beta subunit family. Type 1 subfamily. Tetramer of two alpha and two beta subunits. Mg(2+) serves as cofactor.

Its subcellular location is the cytoplasm. It catalyses the reaction tRNA(Phe) + L-phenylalanine + ATP = L-phenylalanyl-tRNA(Phe) + AMP + diphosphate + H(+). The chain is Phenylalanine--tRNA ligase beta subunit from Xanthomonas oryzae pv. oryzae (strain KACC10331 / KXO85).